The following is a 273-amino-acid chain: Orotidine 5'-phosphate decarboxylase (273 aa).

Lysine 95 serves as the catalytic Proton donor.

The protein belongs to the OMP decarboxylase family. Type 2 subfamily.

It catalyses the reaction orotidine 5'-phosphate + H(+) = UMP + CO2. It functions in the pathway pyrimidine metabolism; UMP biosynthesis via de novo pathway; UMP from orotate: step 2/2. The protein is Orotidine 5'-phosphate decarboxylase of Bordetella bronchiseptica (strain ATCC BAA-588 / NCTC 13252 / RB50) (Alcaligenes bronchisepticus).